We begin with the raw amino-acid sequence, 251 residues long: 3-deoxy-manno-octulosonate cytidylyltransferase (251 aa).

The protein belongs to the KdsB family.

It is found in the cytoplasm. The catalysed reaction is 3-deoxy-alpha-D-manno-oct-2-ulosonate + CTP = CMP-3-deoxy-beta-D-manno-octulosonate + diphosphate. It functions in the pathway nucleotide-sugar biosynthesis; CMP-3-deoxy-D-manno-octulosonate biosynthesis; CMP-3-deoxy-D-manno-octulosonate from 3-deoxy-D-manno-octulosonate and CTP: step 1/1. It participates in bacterial outer membrane biogenesis; lipopolysaccharide biosynthesis. Activates KDO (a required 8-carbon sugar) for incorporation into bacterial lipopolysaccharide in Gram-negative bacteria. The sequence is that of 3-deoxy-manno-octulosonate cytidylyltransferase from Vibrio parahaemolyticus serotype O3:K6 (strain RIMD 2210633).